The sequence spans 343 residues: MQAIIDAEQSFKFPVLVGDIGGTNARFSILVDSNAEPKEFPVLQTADYATIDEAIQHAILDQTAIQPRSVILAVAGPVDGDEIDLTNCDWVVRPKKMIADLGFEDVTVLNDFEAQALAVVSLEGHHMEQIGGKPEEAVATRVVLGPGTGLGVAGLFRTRHAWVPVPGEGGHIDIGPRTERDYQIFPHIERIEGRVTGEQILSGRGLRNLYLGICAADKITPTLETPVDITSAGLDGSNPQAAETLDLFATYLGRLAGDLALIFMAHGGVYLSGGIPVRILSALKAGSFRATFEDKAPHKAIMRDIPVRVITYQLAALTGLSAFARTPSRFEVSTEGRRWRMRR.

18–23 (GDIGGT) provides a ligand contact to ATP.

Belongs to the bacterial glucokinase family.

The protein localises to the cytoplasm. The enzyme catalyses D-glucose + ATP = D-glucose 6-phosphate + ADP + H(+). This Brucella abortus (strain 2308) protein is Glucokinase.